Here is a 572-residue protein sequence, read N- to C-terminus: Oxygen-dependent choline dehydrogenase (572 aa).

Position 9–38 (aspartate 9–glutamate 38) interacts with FAD. The Proton acceptor role is filled by histidine 477.

The protein belongs to the GMC oxidoreductase family. FAD serves as cofactor.

The catalysed reaction is choline + A = betaine aldehyde + AH2. The enzyme catalyses betaine aldehyde + NAD(+) + H2O = glycine betaine + NADH + 2 H(+). Its pathway is amine and polyamine biosynthesis; betaine biosynthesis via choline pathway; betaine aldehyde from choline (cytochrome c reductase route): step 1/1. Involved in the biosynthesis of the osmoprotectant glycine betaine. Catalyzes the oxidation of choline to betaine aldehyde and betaine aldehyde to glycine betaine at the same rate. The chain is Oxygen-dependent choline dehydrogenase from Staphylococcus epidermidis (strain ATCC 35984 / DSM 28319 / BCRC 17069 / CCUG 31568 / BM 3577 / RP62A).